A 193-amino-acid chain; its full sequence is Cysteine and glycine-rich protein 1 (193 aa).

One can recognise an LIM zinc-binding 1 domain in the interval 10 to 61 (CGVCQKTVYFAEEVQCEGNSFHKSCFLCMVCKKNLDSTTVAVHGEEIYCKSC). The Nuclear localization signal signature appears at 64–69 (KKYGPK). Residue S81 is modified to Phosphoserine. K84 is modified (N6-acetyllysine). Residue K91 forms a Glycyl lysine isopeptide (Lys-Gly) (interchain with G-Cter in SUMO2) linkage. An N6-acetyllysine mark is found at K112, K131, K137, and K161. Residues 119-170 (CPRCSQAVYAAEKVIGAGKSWHKACFRCAKCGKGLESTTLADKDGEIYCKGC) enclose the LIM zinc-binding 2 domain. Phosphoserine is present on S192.

Interacts with ASCC1; ASCC2 and TRIP4.

Its subcellular location is the nucleus. Functionally, could play a role in neuronal development. The chain is Cysteine and glycine-rich protein 1 (CSRP1) from Pongo abelii (Sumatran orangutan).